The primary structure comprises 232 residues: Myb-related protein 308 (232 aa).

2 consecutive HTH myb-type domains span residues 9–61 and 62–116; these read KAHT…INYL and RPDL…RRKL. 2 DNA-binding regions (H-T-H motif) span residues 37–61 and 89–112; these read WRSLPKAAGLLRCGKSCRLRWINYL and WSLIAGRLPGRTDNEIKNYWNTHI.

In terms of tissue distribution, expressed in roots, stems, leaves, seed pods and flowers.

The protein localises to the nucleus. Its function is as follows. Transcription factor. The chain is Myb-related protein 308 from Antirrhinum majus (Garden snapdragon).